The chain runs to 188 residues: Elongation factor P-like protein (188 aa).

The protein belongs to the elongation factor P family.

This is Elongation factor P-like protein from Marinobacter nauticus (strain ATCC 700491 / DSM 11845 / VT8) (Marinobacter aquaeolei).